The following is a 77-amino-acid chain: Apelin (77 aa).

The N-terminal stretch at 1–22 is a signal peptide; it reads MNLRLCVQALLLLWLSLTAVCG. The propeptide occupies 23–41; sequence VPLMLPPDGTGLEEGSMRY. The interval 46–77 is disordered; sequence RTSRTGPGAWQGGRRKFRRQRPRLSHKGPMPF. Residues 58 to 71 show a composition bias toward basic residues; the sequence is GRRKFRRQRPRLSH.

Belongs to the apelin family. In terms of processing, several active peptides may be produced by proteolytic processing of the peptide precursor. In terms of tissue distribution, expressed in extraembryonic visceral endoderm and in the primitive streak at 6.5 and 7.5 dpc. Expressed in the anterior visceral yolk sac at 8.25 dpc. Expressed weakly in the embryonic heart at 11.5 dpc. Expressed in the adult heart. Expressed in endothelial cells and cardiomyocytes and weakly expressed in fibroblasts.

It is found in the secreted. Its subcellular location is the extracellular space. Peptide hormone that functions as endogenous ligand for the G-protein-coupled apelin receptor (APLNR/APJ). Functions as a balanced agonist activating both G(i) protein pathway and beta-arrestin pathway of APLNR. Downstream G proteins activation, apelin can inhibit cAMP production and activate key intracellular effectors such as ERKs. On the other hand, APLNR activation induces beta-arrestin recruitment to the membrane leading to desensitization and internalization of the receptor. Apelin also blunts mechanical stretch-induced hypertrophic induction from APLNR. Apelin-36 dissociates more hardly than (pyroglu)apelin-13 from APLNR. Involved in the regulation of cardiac precursor cell movements during gastrulation and heart morphogenesis. Has an inhibitory effect on cytokine production in response to T-cell receptor/CD3 cross-linking; the oral intake of apelin in the colostrum and the milk might therefore modulate immune responses in neonates. Plays a role in early coronary blood vessels formation. Mediates myocardial contractility in an ERK1/2-dependent manner. May also have a role in the central control of body fluid homeostasis by influencing vasopressin release and drinking behavior. This is Apelin from Mus musculus (Mouse).